Reading from the N-terminus, the 262-residue chain is Putative ankyrin repeat protein R848 (262 aa).

ANK repeat units follow at residues 8–37 (SNDY…NVTH), 38–67 (DNNY…DIRD), 68–97 (CRDY…NIRA), 99–127 (DDYA…NFRA), 128–157 (DNDY…DIRA), 159–187 (DDYA…DFRS), and 189–217 (NNAS…DVNT).

This chain is Putative ankyrin repeat protein R848, found in Acanthamoeba polyphaga (Amoeba).